Reading from the N-terminus, the 59-residue chain is Putative potassium channel toxin Ts22 (59 aa).

The first 22 residues, Met-1 to Gln-22, serve as a signal peptide directing secretion. 3 disulfides stabilise this stretch: Cys-29-Cys-50, Cys-35-Cys-55, and Cys-39-Cys-57.

It belongs to the short scorpion toxin superfamily. Potassium channel inhibitor family. Alpha-KTx 04 subfamily. Expressed by the venom gland.

The protein localises to the secreted. Its function is as follows. Potently blocks voltage-gated potassium channels (Kv). The polypeptide is Putative potassium channel toxin Ts22 (Tityus serrulatus (Brazilian scorpion)).